The chain runs to 320 residues: Cytochrome f (320 aa).

The first 36 residues, 1 to 36, serve as a signal peptide directing secretion; sequence MKHTNSKQKLKDIINFCQAIFTLCIICLYQANISNS. Heme is bound by residues Y37, C57, C60, and H61. Residues 286–305 traverse the membrane as a helical segment; it reads LISFIFFSISVLISQLFFVL.

The protein belongs to the cytochrome f family. As to quaternary structure, the 4 large subunits of the cytochrome b6-f complex are cytochrome b6, subunit IV (17 kDa polypeptide, petD), cytochrome f and the Rieske protein, while the 4 small subunits are PetG, PetL, PetM and PetN. The complex functions as a dimer. The cofactor is heme.

It is found in the plastid. The protein localises to the chloroplast thylakoid membrane. Component of the cytochrome b6-f complex, which mediates electron transfer between photosystem II (PSII) and photosystem I (PSI), cyclic electron flow around PSI, and state transitions. This chain is Cytochrome f (petA), found in Cyanidium caldarium (Red alga).